A 1068-amino-acid chain; its full sequence is Focal adhesion kinase 1 (1068 aa).

Residues 1–26 (MAAAYLDPNLNHNPSTNAKSRLSTGM) form a disordered region. Polar residues predominate over residues 10-23 (LNHNPSTNAKSRLS). One can recognise an FERM domain in the interval 35–355 (RVLRVFHYFE…GYCRLVSGAS (321 aa)). Phosphotyrosine is present on residues Tyr403 and Tyr413. The Protein kinase domain occupies 435–693 (IELGRCIGEG…ELKAQLSTIL (259 aa)). ATP contacts are provided by residues 441-447 (IGEGQFG), Lys467, and 513-515 (ELC). Residue Asp559 is the Proton acceptor of the active site. Residues Tyr589 and Tyr590 each carry the phosphotyrosine; by autocatalysis modification. Over residues 699 to 710 (QQEERMRMESRR) the composition is skewed to basic and acidic residues. Disordered stretches follow at residues 699 to 750 (QQEE…QHMM) and 869 to 912 (GNQH…DGYN). Residues Tyr874 and Tyr941 each carry the phosphotyrosine modification.

Belongs to the protein kinase superfamily. Tyr protein kinase family. FAK subfamily. Post-translationally, phosphorylated on tyrosine residues; phosphorylated kinase is first detected during gastrulation, suggesting that tyrosine phosphorylation is developmentally regulated.

The protein localises to the cell junction. Its subcellular location is the focal adhesion. It is found in the cell membrane. The protein resides in the cytoplasm. It localises to the cytoskeleton. The protein localises to the cilium basal body. The enzyme catalyses L-tyrosyl-[protein] + ATP = O-phospho-L-tyrosyl-[protein] + ADP + H(+). Non-receptor protein-tyrosine kinase implicated in signaling pathways involved in cell motility, proliferation and apoptosis. Activated by tyrosine-phosphorylation in response to either integrin clustering induced by cell adhesion or antibody cross-linking, or via G-protein coupled receptor (GPCR) occupancy by ligands such as bombesin or lysophosphatidic acid, or via LDL receptor occupancy. Microtubule-induced dephosphorylation at Tyr-397 is crucial for the induction of focal adhesion disassembly. The sequence is that of Focal adhesion kinase 1 (ptk2) from Xenopus laevis (African clawed frog).